The sequence spans 1131 residues: Probable chloride channel protein UM03490-D (1131 aa).

The next 12 membrane-spanning stretches (helical) occupy residues 137–157 (GVIV…SLAT), 206–226 (VTVT…PILP), 305–325 (FPAW…CAHL), 341–361 (IKCI…TLAI), 380–397 (GPAV…ASFF), 414–434 (SSAA…LFSL), 485–505 (FEIM…AFVI), 518–538 (YLVK…AFVG), 577–597 (MVNS…VSYG), 603–623 (GIFV…GILV), 643–663 (VPCI…LAGV), and 680–702 (ALTY…DWFS). 2 disordered regions span residues 815 to 835 (DGVE…LSVA) and 858 to 928 (ATGA…AGGG). Residues 866–877 (GLGSTSATGVAS) show a composition bias toward low complexity. The CBS domain occupies 944–1000 (IDPTPLIVQPGMPLETVMDMFKNLGPRVILVVEYGRLSGLVTVKDVLKRIAMQEKAE). A compositionally biased stretch (low complexity) spans 1061–1078 (RASASRGGAPGSQAGQAR). Residues 1061–1131 (RASASRGGAP…VLGAQDDDDE (71 aa)) form a disordered region. Residues 1104–1113 (STRQTSATKN) are compositionally biased toward polar residues.

It belongs to the chloride channel (TC 2.A.49) family.

Its subcellular location is the membrane. Its function is as follows. Voltage-gated chloride channel. The chain is Probable chloride channel protein UM03490-D from Mycosarcoma maydis (Corn smut fungus).